A 425-amino-acid chain; its full sequence is Alpha-muurolene synthase (425 aa).

Positions 97, 101, 240, 244, and 248 each coordinate Mg(2+). The DDXXD motif signature appears at 97-101 (DNISD). The segment at 348–382 (VAPPPPPPPPTPPPQSSDADTKKQKVKAQDGKGPV) is disordered. The segment covering 349–362 (APPPPPPPPTPPPQ) has biased composition (pro residues). Residues 366-377 (ADTKKQKVKAQD) show a composition bias toward basic and acidic residues.

This sequence belongs to the terpene synthase family. Mg(2+) is required as a cofactor.

The enzyme catalyses (2E,6E)-farnesyl diphosphate = alpha-muurolene + diphosphate. The catalysed reaction is (2E,6E)-farnesyl diphosphate = gamma-muurolene + diphosphate. It carries out the reaction (2E,6E)-farnesyl diphosphate = (+)-(R)-germacrene A + diphosphate. Its function is as follows. Sesquiterpene synthase that catalyzes the formation of alpha-muurolene, and at lower level (+)-(R)-germacrene A and gamma-muurolene. The chain is Alpha-muurolene synthase (COP3) from Coprinopsis cinerea (strain Okayama-7 / 130 / ATCC MYA-4618 / FGSC 9003) (Inky cap fungus).